We begin with the raw amino-acid sequence, 257 residues long: Beta-fibrinogenase mucrofibrase-3 (257 aa).

Residues 1-18 (MVLIRVLANLLILQLSYA) form the signal peptide. Positions 19–24 (QKSSEL) are excised as a propeptide. In terms of domain architecture, Peptidase S1 spans 25 to 248 (VIGGDECNIN…HLDWIKGIIA (224 aa)). 6 disulfides stabilise this stretch: Cys-31–Cys-162, Cys-49–Cys-65, Cys-97–Cys-255, Cys-141–Cys-209, Cys-173–Cys-188, and Cys-199–Cys-224. Active-site charge relay system residues include His-64 and Asp-109. Residue Ser-203 is the Charge relay system of the active site.

This sequence belongs to the peptidase S1 family. Snake venom subfamily. In terms of assembly, monomer. As to expression, expressed by the venom gland.

The protein localises to the secreted. Its function is as follows. Snake venom serine protease with fibrinogenolytic activities. Cleaves beta-chain of fibrinogen (FGB) efficiently and shows relatively lower activity on alpha-chain. This Protobothrops mucrosquamatus (Taiwan habu) protein is Beta-fibrinogenase mucrofibrase-3.